A 530-amino-acid chain; its full sequence is Purine-cytosine permease FCY22 (530 aa).

Phosphothreonine is present on threonine 46. A run of 12 helical transmembrane segments spans residues 96-116 (MVIV…LNFG), 119-139 (VLVI…FSLF), 162-182 (FFSL…ISVS), 197-217 (CPIW…TFFG), 220-240 (VVHA…LVII), 263-283 (GVLS…TYAA), 298-318 (IFFS…ILGA), 345-365 (AILV…LLAL), 372-392 (VPGM…LAKI), 396-416 (VWTM…TYYF), 418-438 (GFME…IAIA), and 463-483 (LPIG…VALG).

The protein belongs to the purine-cytosine permease (2.A.39) family.

Its subcellular location is the membrane. Functionally, probable purine-cytosine permease. In Saccharomyces cerevisiae (strain ATCC 204508 / S288c) (Baker's yeast), this protein is Purine-cytosine permease FCY22 (FCY22).